The sequence spans 141 residues: MVLERTLSIIKPDAVAKNVIGDIYSRFEKAGLKIVAAKYKQLSRREAEGFYAVHRDRPFFNALVEFMISGPVMIQVLESENAVARHRELLGATNPKDAAPGTIRADFAESIEANAAHGSDSVENAAIEVAYFFAATEIILR.

6 residues coordinate ATP: lysine 11, phenylalanine 59, arginine 87, threonine 93, arginine 104, and asparagine 114. Histidine 117 functions as the Pros-phosphohistidine intermediate in the catalytic mechanism.

This sequence belongs to the NDK family. Homotetramer. It depends on Mg(2+) as a cofactor.

Its subcellular location is the cytoplasm. The catalysed reaction is a 2'-deoxyribonucleoside 5'-diphosphate + ATP = a 2'-deoxyribonucleoside 5'-triphosphate + ADP. It catalyses the reaction a ribonucleoside 5'-diphosphate + ATP = a ribonucleoside 5'-triphosphate + ADP. Functionally, major role in the synthesis of nucleoside triphosphates other than ATP. The ATP gamma phosphate is transferred to the NDP beta phosphate via a ping-pong mechanism, using a phosphorylated active-site intermediate. The protein is Nucleoside diphosphate kinase of Xylella fastidiosa (strain M23).